Here is a 386-residue protein sequence, read N- to C-terminus: 1-deoxy-D-xylulose 5-phosphate reductoisomerase (386 aa).

Residues T13, G14, S15, I16, N40, and N122 each contribute to the NADPH site. 1-deoxy-D-xylulose 5-phosphate is bound at residue K123. NADPH is bound at residue E124. D148 contacts Mn(2+). S149, E150, S177, and H201 together coordinate 1-deoxy-D-xylulose 5-phosphate. Mn(2+) is bound at residue E150. G207 lines the NADPH pocket. 4 residues coordinate 1-deoxy-D-xylulose 5-phosphate: S214, N219, K220, and E223. E223 contacts Mn(2+).

It belongs to the DXR family. It depends on Mg(2+) as a cofactor. The cofactor is Mn(2+).

It carries out the reaction 2-C-methyl-D-erythritol 4-phosphate + NADP(+) = 1-deoxy-D-xylulose 5-phosphate + NADPH + H(+). It functions in the pathway isoprenoid biosynthesis; isopentenyl diphosphate biosynthesis via DXP pathway; isopentenyl diphosphate from 1-deoxy-D-xylulose 5-phosphate: step 1/6. Its function is as follows. Catalyzes the NADPH-dependent rearrangement and reduction of 1-deoxy-D-xylulose-5-phosphate (DXP) to 2-C-methyl-D-erythritol 4-phosphate (MEP). This chain is 1-deoxy-D-xylulose 5-phosphate reductoisomerase, found in Francisella tularensis subsp. holarctica (strain OSU18).